The primary structure comprises 1975 residues: MKLPLGLLMICLGLTLAKGETNLPPVFTQTLNNIILYENVTVGTVVFRLEAYDPEGSPVTYGAIGADHFSVDPVSGNITLIKPLDREEKDTLKFLVSIRDRVDPEGESERDNVVEVPITFIILDLNDNPPEFQNTPYEADVNEDAAVGTTIFDKITVKDRDIVGESLDLKCLPQQQSPEACRKFRLHIIKRDATILEAAVVLNDTLNYNQRMVYHFQIEATDGPHKTQTTFEARVKDVQDKPPVFQGSLSTVIDEDSPINTLVLTVHARDGDTGEPRKIVYDLRTNPNDYFLLDAQTGELRTAKPLDREALEDSTGIISLVIRARELVNGVPSDDPLTSATAKATVTIRDVNDSPPVFNHKEYSVSLLENTLPGTPLALDMSVSDADVGINSKFALRLDDVSGVFDVEPKLVTGYSQVNIRVANGTLDYENPNQRKFIVLVVAEETDTNPRLSSTATITVSVLDANDNKPVFEQESYSASVSEAALPGQYIATITARDVDSGSYGDSGIRYSLSGTGAELFHVNEQTGVISLANCHDNGESNRRERRDLNEDEHVEEDDGEGHLEMLSMEAATREIGTEPTVQYTLITQAPEEQASSVPLPAPVPHAAPSGVPAATANDDKAPQTCLDYESETTYFLSYKATDDNGRGSASVVSLRISVTDANDSPPVCESPLYRASVDEGAVVFDSPLIVKARDADTMSRISYRIRGSEQVESIFDIDRETGQIIIRPNATLDVTNLNSDQLIFAVEANDGLFTAHCGVNITVRDVNNHVPNFEQQSYSAVVEENSEIGTSVERVHATDLDTGKNAELRYRIQQGSFDDFGIVETTGEVFVSRKLDFDRRNTYQLQIQASDQGTPSLTGTATLTINVQNSNDKDPYFVPATQHAEVRADAPPGQLVYTLIALDPDVANHNALEFAGTDDITAIDKEGKELPHYDQFKEYFKISRNGKVSVNKQLDRNLFAVMRINVLVTDSTAPNVQQGRGLLIIQIIDVNKNPPRFNAPWSVEQPQIKLQMVEEQPVGTVLTTLQANDEDSSIGEFNISDNDYFAINQTSGMIYTIARLDYEVVKEVKFQVTVSDTGVPALTATADVVVDIINLNDNDPKFSQSDYYFNVTENSPRGTVAGKVEAHDGDVGVFGEITYTLIGENNKYFSIDAYTGNVMVANSSILDREQIKELTLSVVAQDKAPAAVQKSATATIHINILDVNDNAPVFTRDVYNSTVAENAAYQPPAALLQVQAIDQDEGLYGDVRYIITAGNEMGLFKLDAQSGIVYPAQSLSGKHGAYELTISARDTQGSGTMESTTKAIITVLRVNRHKPEFVIPALSNATIEIPGDIVQPDYLLLTVRAMDNDTEENGKVSYHLQVNNRNEQQTGEFKIDEVTGELRAKTQLNRKNRANYDIILVARDAGNPPFESLRLLSVSIVDANENRPEFPDASNPYKVSINENSGRDVKIGHIQAASRSKHNRDIFYYMLLGNEDGAFYVDKLTGDIYTNKSLDREETDVYTLYILASIKADLHISEEERASFSIKTLNRDNTVAKVAITVLDVNDNPPVFEKPIYYAGVNANAKMGAAITLVNATDADQGKNAKIEFMIVASNLYKFGATKSTGSIVPSPFAISQDGRISANTIMAEYNQDRFELEIVARELEQPQSSASTKVNIWVFDGTQLVRVILSRPPEEVYQEQEEIIAELRNATQHRIIVDEIRFHLDSIGRIRMDWCDLYFHAVDPQTQQIAPVDEILKDIDRNYDYLKDYYAGFAIENVVPAYIAIVQDEFDLAVAGLVALVIVLFVGVISFIVLCCCLKHWNLSVPVETRRKEALIKKQIIEDLNTTENPLWIEQKLKLYEEQELTMQVFSEPDHISNSEAPGHLDHRSSLEQVHHVGQTVDNTYATIQPRNNQNRLTGGGGAGGGSMRSGGGASAGGVGGAGLLLARVDPHMNEFADYATLRNNRAPSLYEFTGSTFQAPIRDGDDAVAELI.

The N-terminal stretch at 1–17 is a signal peptide; that stretch reads MKLPLGLLMICLGLTLA. At 18 to 1775 the chain is on the extracellular side; it reads KGETNLPPVF…AIVQDEFDLA (1758 aa). Cadherin domains are found at residues 28 to 132, 133 to 245, 246 to 358, 359 to 472, 473 to 669, 670 to 774, 775 to 878, 879 to 998, 999 to 1103, 1104 to 1211, 1212 to 1318, 1319 to 1431, 1432 to 1553, and 1554 to 1677; these read TQTL…PPEF, QNTP…PPVF, QGSL…PPVF, NHKE…KPVF, EQES…PPVC, ESPL…VPNF, EQQS…DPYF, VPAT…PPRF, NAPW…DPKF, SQSD…APVF, TRDV…KPEF, VIPA…RPEF, PDAS…PPVF, and EKPI…PPEE. N-linked (GlcNAc...) asparagine glycans are attached at residues N39, N77, and N203. N-linked (GlcNAc...) asparagine glycosylation is present at N424. The interval 535 to 560 is disordered; that stretch reads CHDNGESNRRERRDLNEDEHVEEDDG. Over residues 537–549 the composition is skewed to basic and acidic residues; that stretch reads DNGESNRRERRDL. Over residues 550-560 the composition is skewed to acidic residues; that stretch reads NEDEHVEEDDG. N-linked (GlcNAc...) asparagine glycans are attached at residues N730 and N761. N1039, N1049, N1111, N1163, N1217, N1325, N1349, N1492, N1576, and N1691 each carry an N-linked (GlcNAc...) asparagine glycan. A helical transmembrane segment spans residues 1776-1796; it reads VAGLVALVIVLFVGVISFIVL. Residues 1797 to 1975 lie on the Cytoplasmic side of the membrane; that stretch reads CCCLKHWNLS…DGDDAVAELI (179 aa). Residues 1887-1899 are compositionally biased toward polar residues; sequence YATIQPRNNQNRL. The segment at 1887-1916 is disordered; that stretch reads YATIQPRNNQNRLTGGGGAGGGSMRSGGGA. Gly residues predominate over residues 1900 to 1916; it reads TGGGGAGGGSMRSGGGA.

It is found in the cell membrane. Its function is as follows. Cadherins are calcium-dependent cell adhesion proteins. They preferentially interact with themselves in a homophilic manner in connecting cells. The sequence is that of Cadherin-87A (Cad87A) from Drosophila melanogaster (Fruit fly).